The following is a 92-amino-acid chain: YcgL domain-containing protein Sputcn32_1766 (92 aa).

One can recognise a YcgL domain in the interval 1 to 85; it reads MLCTVYKSTR…PQVNLLAEHK (85 aa).

The sequence is that of YcgL domain-containing protein Sputcn32_1766 from Shewanella putrefaciens (strain CN-32 / ATCC BAA-453).